A 143-amino-acid polypeptide reads, in one-letter code: Glutaredoxin-2 (143 aa).

The transit peptide at 1–30 (METNFSFDSNLIVIIIITLFATRIIAKRFL) directs the protein to the mitochondrion. Phosphoserine is present on S37. Positions 41-143 (VAHVKDLIGQ…LAEILKPVFQ (103 aa)) constitute a Glutaredoxin domain. 58–63 (KTYCPY) contacts glutathione. C61 carries the S-glutathionyl cysteine; alternate modification. C61 and C64 are disulfide-bonded. S91 carries the phosphoserine modification. Residues V109 and 122–123 (NS) each bind glutathione.

This sequence belongs to the glutaredoxin family.

Its subcellular location is the cytoplasm. It localises to the mitochondrion. It carries out the reaction 2 glutathione + H2O2 = glutathione disulfide + 2 H2O. The catalysed reaction is 1-chloro-2,4-dinitrobenzene + glutathione = 2,4-dinitrophenyl-S-glutathione + chloride + H(+). The enzyme catalyses RX + glutathione = an S-substituted glutathione + a halide anion + H(+). Component of the glutathione system which performs several activities such as glutathione-dependent oxidoreductase, glutathione peroxidase and glutathione S-transferase (GST) activity. The disulfide bond functions as an electron carrier in the glutathione-dependent synthesis of deoxyribonucleotides by the enzyme ribonucleotide reductase. In addition, it is also involved in reducing cytosolic protein- and non-protein-disulfides in a coupled system with glutathione reductase. Required for resistance to reactive oxygen species (ROS) by directly reducing hydroperoxides and for the detoxification of ROS-mediated damage. GRX2 is more active as an oxidoreductase than GRX1. Responsible for the S-glutathionylation of DHBP synthase. The protein is Glutaredoxin-2 (GRX2) of Saccharomyces cerevisiae (strain ATCC 204508 / S288c) (Baker's yeast).